Here is a 486-residue protein sequence, read N- to C-terminus: MGYKYRDLHDFIKDLEKEGELVRIKEPLSPILEITEVTDRVCKMPGGGKALLFENPKGYRIPVLTNLYGSEKRIKKALGYENLEDIGWKLYRILKPEVPKTFLEKIKKLPELKKLNDAIPKVVKRGKVQEEVIMGDINLEDLPILKCWPKDGGRYITFGQVITKDPESGIRNVGLYRLQVLDKDKLAVHWQIHKDGNHHYWKAKRLGKKLEVAIAIGGEPPLPYVASAPLPPEVDEYLFAGIIMERPVELVKGLTVDLEYPANAEIAIEGYVDPEEPLVDEGPFGDHTGFYTPVDKYPQMHVTAIVMRKDPIYLTTIVGRPPQEDKYLGWATERIFLPLIKFNLPEVVDYHLPAEGCFHNFCFVSIKKRYPGHAFKVAYALLGLGLMSLEKHIVVFDDWINVQDIGEVLWAWGNNVDPQRDVLILKGPIDVLDHATNEVGFGGKMIIDATTKWKEEGYTREWPEVIEMSPEVKKRIDEIWDRLGIE.

It belongs to the UbiD family.

This is an uncharacterized protein from Aquifex aeolicus (strain VF5).